Reading from the N-terminus, the 313-residue chain is Porphobilinogen deaminase (313 aa).

Residue Cys242 is modified to S-(dipyrrolylmethanemethyl)cysteine.

This sequence belongs to the HMBS family. Monomer. It depends on dipyrromethane as a cofactor.

It catalyses the reaction 4 porphobilinogen + H2O = hydroxymethylbilane + 4 NH4(+). It participates in porphyrin-containing compound metabolism; protoporphyrin-IX biosynthesis; coproporphyrinogen-III from 5-aminolevulinate: step 2/4. In terms of biological role, tetrapolymerization of the monopyrrole PBG into the hydroxymethylbilane pre-uroporphyrinogen in several discrete steps. The chain is Porphobilinogen deaminase from Pectobacterium atrosepticum (strain SCRI 1043 / ATCC BAA-672) (Erwinia carotovora subsp. atroseptica).